Reading from the N-terminus, the 494-residue chain is Ankyrin repeat domain-containing protein 33B (494 aa).

The tract at residues 1–80 (MVLLAGTGPE…SAESVPEGVP (80 aa)) is disordered. Positions 30–42 (VEEDPADYEEFED) are enriched in acidic residues. 5 ANK repeats span residues 84 to 113 (PETATLLRAACANNVGLLRTLVRRGVSVEE), 120 to 150 (NGRTGLIVACYHGFVDTVVALAECPHVDVNW), 154 to 183 (EGNTALITAAQAGHAIITNYLLNYFPGLDL), 189 to 218 (FGFTALMKAAMQGRTDCIRALMLAGADVHA), and 223 to 255 (RGMSPQEWATYTGRVDAVRLMQRLLERPCPEQF). The segment at 349–494 (RAARGPQAQE…RRTAPWKKRT (146 aa)) is disordered. Residues 371–382 (TGQEDADSREGS) show a composition bias toward basic and acidic residues. Phosphoserine is present on S405. Composition is skewed to basic and acidic residues over residues 440 to 451 (RPARKGSTKDSG) and 459 to 487 (RYKEAKEEKRKAEEAEKKRQAEAQKERRT). Residues 459-488 (RYKEAKEEKRKAEEAEKKRQAEAQKERRTA) adopt a coiled-coil conformation.

The sequence is that of Ankyrin repeat domain-containing protein 33B (ANKRD33B) from Homo sapiens (Human).